A 458-amino-acid chain; its full sequence is MNKFAIVLAAGKGTRMKSALPKVLHQVAGKSMLAHVLKSVSEVEIAKNVVIVGHEADRVIATLPKGTQFVKQVEQLGTGHAVRIAADLLANEEGATLVIAGDTPLITGETLGALFDYHFAQKATATILTAIAPNPTGYGRIIRDEKGSVEKIVEQKDANDFEKSITEINTGTYIFDNKSLFKALTEITTDNAQGEYYLTDVIEIFKKAGQTIAAHILDDFDESLGVNDRVALSQAEGTMRKRINHEHMVNGVTLIDPATTYIDSEVTIGAETVIEANVTIKGNTFIGKNVLITNGSRIENSEIHSNCEVRNSTVEESRMSVGSNVGPYAHLRPGTVLSEEVHVGNFVEIKGSTLGKGTKAGHLTYIGNATVGEKVNFGAGTITANFDGKNKFNTEIDDFAFIGSNSTIIAPLHIGKNALTAAGSVVTEDVPDEAVEIGRGKQVNKLGRAKKMPHYRGQ.

The segment at Met1–Arg229 is pyrophosphorylase. UDP-N-acetyl-alpha-D-glucosamine-binding positions include Leu8–Gly11, Lys22, Gln72, and Gly77–Thr78. Asp102 is a Mg(2+) binding site. Residues Gly139, Glu154, Asn169, and Asn227 each coordinate UDP-N-acetyl-alpha-D-glucosamine. Asn227 contributes to the Mg(2+) binding site. The interval Val230–Asn250 is linker. The interval Gly251–Gln458 is N-acetyltransferase. UDP-N-acetyl-alpha-D-glucosamine contacts are provided by Arg332 and Lys350. His362 acts as the Proton acceptor in catalysis. Residues Tyr365 and Asn376 each contribute to the UDP-N-acetyl-alpha-D-glucosamine site. Positions 379, 404, 422, and 439 each coordinate acetyl-CoA.

It in the N-terminal section; belongs to the N-acetylglucosamine-1-phosphate uridyltransferase family. In the C-terminal section; belongs to the transferase hexapeptide repeat family. Homotrimer. Mg(2+) serves as cofactor.

The protein localises to the cytoplasm. It catalyses the reaction alpha-D-glucosamine 1-phosphate + acetyl-CoA = N-acetyl-alpha-D-glucosamine 1-phosphate + CoA + H(+). The enzyme catalyses N-acetyl-alpha-D-glucosamine 1-phosphate + UTP + H(+) = UDP-N-acetyl-alpha-D-glucosamine + diphosphate. It participates in nucleotide-sugar biosynthesis; UDP-N-acetyl-alpha-D-glucosamine biosynthesis; N-acetyl-alpha-D-glucosamine 1-phosphate from alpha-D-glucosamine 6-phosphate (route II): step 2/2. It functions in the pathway nucleotide-sugar biosynthesis; UDP-N-acetyl-alpha-D-glucosamine biosynthesis; UDP-N-acetyl-alpha-D-glucosamine from N-acetyl-alpha-D-glucosamine 1-phosphate: step 1/1. The protein operates within bacterial outer membrane biogenesis; LPS lipid A biosynthesis. In terms of biological role, catalyzes the last two sequential reactions in the de novo biosynthetic pathway for UDP-N-acetylglucosamine (UDP-GlcNAc). The C-terminal domain catalyzes the transfer of acetyl group from acetyl coenzyme A to glucosamine-1-phosphate (GlcN-1-P) to produce N-acetylglucosamine-1-phosphate (GlcNAc-1-P), which is converted into UDP-GlcNAc by the transfer of uridine 5-monophosphate (from uridine 5-triphosphate), a reaction catalyzed by the N-terminal domain. In Lactococcus lactis subsp. cremoris (strain SK11), this protein is Bifunctional protein GlmU.